The following is a 421-amino-acid chain: UDP-N-acetylglucosamine 1-carboxyvinyltransferase (421 aa).

22–23 (KN) provides a ligand contact to phosphoenolpyruvate. Position 92 (Arg92) interacts with UDP-N-acetyl-alpha-D-glucosamine. Cys116 acts as the Proton donor in catalysis. Position 116 is a 2-(S-cysteinyl)pyruvic acid O-phosphothioketal (Cys116). The UDP-N-acetyl-alpha-D-glucosamine site is built by Asp306 and Val328.

The protein belongs to the EPSP synthase family. MurA subfamily.

The protein localises to the cytoplasm. The enzyme catalyses phosphoenolpyruvate + UDP-N-acetyl-alpha-D-glucosamine = UDP-N-acetyl-3-O-(1-carboxyvinyl)-alpha-D-glucosamine + phosphate. Its pathway is cell wall biogenesis; peptidoglycan biosynthesis. Cell wall formation. Adds enolpyruvyl to UDP-N-acetylglucosamine. This Thermotoga petrophila (strain ATCC BAA-488 / DSM 13995 / JCM 10881 / RKU-1) protein is UDP-N-acetylglucosamine 1-carboxyvinyltransferase.